We begin with the raw amino-acid sequence, 28 residues long: Kappa-buthitoxin-Tt2b (28 aa).

Intrachain disulfides connect C2–C24, C7–C20, and C11–C26.

In terms of tissue distribution, expressed by the venom gland.

It localises to the secreted. In terms of biological role, blocks potassium channels Shaker-IR (with inactivation domain removed) and hKv1.2/KCNA2. This chain is Kappa-buthitoxin-Tt2b, found in Tityus trivittatus (Argentinean scorpion).